We begin with the raw amino-acid sequence, 227 residues long: 7-cyano-7-deazaguanine synthase (227 aa).

7 to 17 (LSGGMDSLVTT) is an ATP binding site. Positions 187, 195, 198, and 201 each coordinate Zn(2+).

It belongs to the QueC family. Requires Zn(2+) as cofactor.

It carries out the reaction 7-carboxy-7-deazaguanine + NH4(+) + ATP = 7-cyano-7-deazaguanine + ADP + phosphate + H2O + H(+). The protein operates within purine metabolism; 7-cyano-7-deazaguanine biosynthesis. Catalyzes the ATP-dependent conversion of 7-carboxy-7-deazaguanine (CDG) to 7-cyano-7-deazaguanine (preQ(0)). This chain is 7-cyano-7-deazaguanine synthase, found in Chlorobium luteolum (strain DSM 273 / BCRC 81028 / 2530) (Pelodictyon luteolum).